Here is a 201-residue protein sequence, read N- to C-terminus: Protein TV1384 (201 aa).

The 190-residue stretch at 11 to 200 (DIGAKAVMLA…EIEPNGKVEQ (190 aa)) folds into the AMMECR1 domain.

This is Protein TV1384 from Thermoplasma volcanium (strain ATCC 51530 / DSM 4299 / JCM 9571 / NBRC 15438 / GSS1).